The sequence spans 395 residues: Elongation factor Tu (395 aa).

One can recognise a tr-type G domain in the interval 10-204 (KSHVNIGTIG…AVDEYIPTPE (195 aa)). A G1 region spans residues 19–26 (GHVDHGKT). 19–26 (GHVDHGKT) serves as a coordination point for GTP. Thr-26 provides a ligand contact to Mg(2+). Residues 60–64 (GITIN) form a G2 region. Residues 81–84 (DCPG) are G3. GTP-binding positions include 81–85 (DCPGH) and 136–139 (NKMD). The G4 stretch occupies residues 136 to 139 (NKMD). Residues 174-176 (SAL) form a G5 region.

Belongs to the TRAFAC class translation factor GTPase superfamily. Classic translation factor GTPase family. EF-Tu/EF-1A subfamily. Monomer.

It localises to the cytoplasm. The catalysed reaction is GTP + H2O = GDP + phosphate + H(+). Its function is as follows. GTP hydrolase that promotes the GTP-dependent binding of aminoacyl-tRNA to the A-site of ribosomes during protein biosynthesis. This chain is Elongation factor Tu, found in Enterococcus faecalis (strain ATCC 700802 / V583).